The sequence spans 101 residues: Urease subunit beta (101 aa).

The protein belongs to the urease beta subunit family. In terms of assembly, heterotrimer of UreA (gamma), UreB (beta) and UreC (alpha) subunits. Three heterotrimers associate to form the active enzyme.

Its subcellular location is the cytoplasm. It catalyses the reaction urea + 2 H2O + H(+) = hydrogencarbonate + 2 NH4(+). The protein operates within nitrogen metabolism; urea degradation; CO(2) and NH(3) from urea (urease route): step 1/1. The chain is Urease subunit beta from Burkholderia orbicola (strain AU 1054).